A 103-amino-acid polypeptide reads, in one-letter code: Cell division protein FtsB (103 aa).

Over 1–3 (MGK) the chain is Cytoplasmic. Residues 4-21 (LTLLLLAILVWLQYSLWF) form a helical membrane-spanning segment. The Periplasmic portion of the chain corresponds to 22–103 (GKNGIHDYTR…RAQSAGQNNR (82 aa)). Residues 28–71 (DYTRVNDDVAALQATNAKLKARNDQLFAEIDDLNGGQEALEERA) are a coiled coil.

Belongs to the FtsB family. Part of a complex composed of FtsB, FtsL and FtsQ.

It localises to the cell inner membrane. Its function is as follows. Essential cell division protein. May link together the upstream cell division proteins, which are predominantly cytoplasmic, with the downstream cell division proteins, which are predominantly periplasmic. This is Cell division protein FtsB from Shigella flexneri serotype 5b (strain 8401).